The following is a 539-amino-acid chain: G protein-coupled receptor associated sorting protein 3 (539 aa).

Residues 1-10 show a composition bias toward basic residues; sequence MTGSKNKARA. 2 disordered regions span residues 1 to 112 and 134 to 172; these read MTGS…NWFW and VAKC…EENV. 2 stretches are compositionally biased toward basic and acidic residues: residues 66-80 and 88-106; these read VVAE…ESKA and FNHR…DKPS. Residues 134-146 are compositionally biased toward polar residues; that stretch reads VAKCENKPSTSIQ.

It belongs to the GPRASP family. In terms of assembly, homodimer.

It localises to the cytoplasm. The protein resides in the nucleus. Its function is as follows. Survival and differentiation promoting protein that plays a role in the regulation of neurosynaptogenesis. Induces phosphatase PP2A activity which results in APP dephosphorylation and inhibits BACE1-mediated processing of APP. This chain is G protein-coupled receptor associated sorting protein 3 (Gprasp3), found in Mus musculus (Mouse).